A 288-amino-acid chain; its full sequence is Phosphatidylserine decarboxylase proenzyme (288 aa).

Active-site charge relay system; for autoendoproteolytic cleavage activity residues include aspartate 88, histidine 145, and serine 248. Serine 248 acts as the Schiff-base intermediate with substrate; via pyruvic acid; for decarboxylase activity in catalysis. Serine 248 is subject to Pyruvic acid (Ser); by autocatalysis.

It belongs to the phosphatidylserine decarboxylase family. PSD-B subfamily. Prokaryotic type I sub-subfamily. In terms of assembly, heterodimer of a large membrane-associated beta subunit and a small pyruvoyl-containing alpha subunit. Pyruvate serves as cofactor. Is synthesized initially as an inactive proenzyme. Formation of the active enzyme involves a self-maturation process in which the active site pyruvoyl group is generated from an internal serine residue via an autocatalytic post-translational modification. Two non-identical subunits are generated from the proenzyme in this reaction, and the pyruvate is formed at the N-terminus of the alpha chain, which is derived from the carboxyl end of the proenzyme. The autoendoproteolytic cleavage occurs by a canonical serine protease mechanism, in which the side chain hydroxyl group of the serine supplies its oxygen atom to form the C-terminus of the beta chain, while the remainder of the serine residue undergoes an oxidative deamination to produce ammonia and the pyruvoyl prosthetic group on the alpha chain. During this reaction, the Ser that is part of the protease active site of the proenzyme becomes the pyruvoyl prosthetic group, which constitutes an essential element of the active site of the mature decarboxylase.

It is found in the cell membrane. The catalysed reaction is a 1,2-diacyl-sn-glycero-3-phospho-L-serine + H(+) = a 1,2-diacyl-sn-glycero-3-phosphoethanolamine + CO2. It functions in the pathway phospholipid metabolism; phosphatidylethanolamine biosynthesis; phosphatidylethanolamine from CDP-diacylglycerol: step 2/2. Catalyzes the formation of phosphatidylethanolamine (PtdEtn) from phosphatidylserine (PtdSer). The polypeptide is Phosphatidylserine decarboxylase proenzyme (Azoarcus sp. (strain BH72)).